Consider the following 98-residue polypeptide: Feather beta keratin (98 aa).

Ser2 carries the post-translational modification N-acetylserine.

This sequence belongs to the avian keratin family. As to quaternary structure, the avian keratins (F-ker, S-ker, C-ker and B-ker) are a complex mixture of very similar polypeptides.

This chain is Feather beta keratin, found in Cathartes aura (Turkey vulture).